The primary structure comprises 162 residues: 6,7-dimethyl-8-ribityllumazine synthase (162 aa).

5-amino-6-(D-ribitylamino)uracil contacts are provided by residues phenylalanine 22, 56 to 58, and 80 to 82; these read TFE and AVI. 85–86 contributes to the (2S)-2-hydroxy-3-oxobutyl phosphate binding site; that stretch reads GT. The active-site Proton donor is histidine 88. Methionine 113 is a binding site for 5-amino-6-(D-ribitylamino)uracil. (2S)-2-hydroxy-3-oxobutyl phosphate is bound at residue arginine 127.

This sequence belongs to the DMRL synthase family.

The catalysed reaction is (2S)-2-hydroxy-3-oxobutyl phosphate + 5-amino-6-(D-ribitylamino)uracil = 6,7-dimethyl-8-(1-D-ribityl)lumazine + phosphate + 2 H2O + H(+). It participates in cofactor biosynthesis; riboflavin biosynthesis; riboflavin from 2-hydroxy-3-oxobutyl phosphate and 5-amino-6-(D-ribitylamino)uracil: step 1/2. Catalyzes the formation of 6,7-dimethyl-8-ribityllumazine by condensation of 5-amino-6-(D-ribitylamino)uracil with 3,4-dihydroxy-2-butanone 4-phosphate. This is the penultimate step in the biosynthesis of riboflavin. This is 6,7-dimethyl-8-ribityllumazine synthase from Anaeromyxobacter dehalogenans (strain 2CP-C).